We begin with the raw amino-acid sequence, 345 residues long: Phosphoribosylformylglycinamidine cyclo-ligase (345 aa).

Belongs to the AIR synthase family.

Its subcellular location is the cytoplasm. It carries out the reaction 2-formamido-N(1)-(5-O-phospho-beta-D-ribosyl)acetamidine + ATP = 5-amino-1-(5-phospho-beta-D-ribosyl)imidazole + ADP + phosphate + H(+). It participates in purine metabolism; IMP biosynthesis via de novo pathway; 5-amino-1-(5-phospho-D-ribosyl)imidazole from N(2)-formyl-N(1)-(5-phospho-D-ribosyl)glycinamide: step 2/2. The sequence is that of Phosphoribosylformylglycinamidine cyclo-ligase from Shewanella baltica (strain OS185).